The following is a 169-amino-acid chain: Large ribosomal subunit protein uL5 (169 aa).

Belongs to the universal ribosomal protein uL5 family. As to quaternary structure, part of the 50S ribosomal subunit; contacts the 5S rRNA and probably tRNA. Forms a bridge to the 30S subunit in the 70S ribosome.

Functionally, this is one of the proteins that bind and probably mediate the attachment of the 5S RNA into the large ribosomal subunit, where it forms part of the central protuberance. In the 70S ribosome it contacts protein S13 of the 30S subunit (bridge B1b), connecting the 2 subunits; this bridge is implicated in subunit movement. May contact the P site tRNA; the 5S rRNA and some of its associated proteins might help stabilize positioning of ribosome-bound tRNAs. This chain is Large ribosomal subunit protein uL5, found in Cenarchaeum symbiosum (strain A).